A 335-amino-acid chain; its full sequence is Anthranilate phosphoribosyltransferase (335 aa).

Residues G79, 82-83, T87, 89-92, 107-115, and S119 contribute to the 5-phospho-alpha-D-ribose 1-diphosphate site; these read GD, NIST, and KHGSRSVSS. G79 contributes to the anthranilate binding site. S91 provides a ligand contact to Mg(2+). R165 provides a ligand contact to anthranilate. Mg(2+)-binding residues include D223 and E224.

This sequence belongs to the anthranilate phosphoribosyltransferase family. Homodimer. Requires Mg(2+) as cofactor.

The enzyme catalyses N-(5-phospho-beta-D-ribosyl)anthranilate + diphosphate = 5-phospho-alpha-D-ribose 1-diphosphate + anthranilate. Its pathway is amino-acid biosynthesis; L-tryptophan biosynthesis; L-tryptophan from chorismate: step 2/5. In terms of biological role, catalyzes the transfer of the phosphoribosyl group of 5-phosphorylribose-1-pyrophosphate (PRPP) to anthranilate to yield N-(5'-phosphoribosyl)-anthranilate (PRA). This Helicobacter pylori (strain G27) protein is Anthranilate phosphoribosyltransferase.